We begin with the raw amino-acid sequence, 252 residues long: uncharacterized protein (252 aa).

16–40 (LVTGASDGIGREAAMTYARYGATVI) is a binding site for NADP(+). Residue Ser152 participates in substrate binding. Residue Tyr165 is the Proton acceptor of the active site.

The protein belongs to the short-chain dehydrogenases/reductases (SDR) family.

This is an uncharacterized protein from Escherichia coli (strain K12).